The chain runs to 151 residues: UPF0098 protein MTH_273 (151 aa).

It belongs to the UPF0098 family.

This Methanothermobacter thermautotrophicus (strain ATCC 29096 / DSM 1053 / JCM 10044 / NBRC 100330 / Delta H) (Methanobacterium thermoautotrophicum) protein is UPF0098 protein MTH_273.